A 595-amino-acid chain; its full sequence is Acriflavine sensitivity control protein acr-2 (595 aa).

The segment at residues 22 to 49 (CYNCHRKRLRCDKSLPACLKCSINGEEC) is a DNA-binding region (zn(2)-C6 fungal-type). Low complexity predominate over residues 69–88 (TTRTTNKTNFNGTNTTTPRT). The segment at 69–172 (TTRTTNKTNF…PDDNPDPSSQ (104 aa)) is disordered. Polar residues predominate over residues 89-117 (VKSSTPTQAPTPSDSPRQLDTDVTSSSAP). Over residues 118–138 (SHTCSRSTTTSTTTTRISSPT) the composition is skewed to low complexity.

It localises to the nucleus. Functionally, probable transcriptional regulator. In Neurospora crassa (strain ATCC 24698 / 74-OR23-1A / CBS 708.71 / DSM 1257 / FGSC 987), this protein is Acriflavine sensitivity control protein acr-2 (acr-2).